A 258-amino-acid chain; its full sequence is 6-phosphogluconolactonase (258 aa).

The residue at position 2 (A2) is an N-acetylalanine. S49 carries the post-translational modification Phosphoserine. K180 bears the N6-acetyllysine mark.

This sequence belongs to the glucosamine/galactosamine-6-phosphate isomerase family. 6-phosphogluconolactonase subfamily.

Its subcellular location is the cytoplasm. The enzyme catalyses 6-phospho-D-glucono-1,5-lactone + H2O = 6-phospho-D-gluconate + H(+). It functions in the pathway carbohydrate degradation; pentose phosphate pathway; D-ribulose 5-phosphate from D-glucose 6-phosphate (oxidative stage): step 2/3. Its function is as follows. Hydrolysis of 6-phosphogluconolactone to 6-phosphogluconate. The polypeptide is 6-phosphogluconolactonase (PGLS) (Bos taurus (Bovine)).